A 641-amino-acid chain; its full sequence is UvrABC system protein C (641 aa).

In terms of domain architecture, GIY-YIG spans E16–I95. Residues T208 to A243 form the UVR domain.

It belongs to the UvrC family. Interacts with UvrB in an incision complex.

The protein localises to the cytoplasm. The UvrABC repair system catalyzes the recognition and processing of DNA lesions. UvrC both incises the 5' and 3' sides of the lesion. The N-terminal half is responsible for the 3' incision and the C-terminal half is responsible for the 5' incision. This chain is UvrABC system protein C, found in Acidothermus cellulolyticus (strain ATCC 43068 / DSM 8971 / 11B).